A 348-amino-acid chain; its full sequence is sn-glycerol-3-phosphate import ATP-binding protein UgpC 3 (348 aa).

The region spanning 4 to 234 (INIVDVKKNY…PASLFVAGFI (231 aa)) is the ABC transporter domain. An ATP-binding site is contributed by 36 to 43 (GPSGCGKS).

It belongs to the ABC transporter superfamily. sn-glycerol-3-phosphate importer (TC 3.A.1.1.3) family. The complex is composed of two ATP-binding proteins (UgpC), two transmembrane proteins (UgpA and UgpE) and a solute-binding protein (UgpB).

The protein resides in the cell inner membrane. The enzyme catalyses sn-glycerol 3-phosphate(out) + ATP + H2O = sn-glycerol 3-phosphate(in) + ADP + phosphate + H(+). Part of the ABC transporter complex UgpBAEC involved in sn-glycerol-3-phosphate (G3P) import. Responsible for energy coupling to the transport system. This is sn-glycerol-3-phosphate import ATP-binding protein UgpC 3 from Rhizobium etli (strain ATCC 51251 / DSM 11541 / JCM 21823 / NBRC 15573 / CFN 42).